A 348-amino-acid polypeptide reads, in one-letter code: Interferon regulatory factor 2 (348 aa).

The segment at residues R5–P113 is a DNA-binding region (IRF tryptophan pentad repeat). N6-acetyllysine occurs at positions 75 and 78. Residues R117 to K137 form a disordered region. Residues T125 to K137 are compositionally biased toward basic and acidic residues. Glycyl lysine isopeptide (Lys-Gly) (interchain with G-Cter in SUMO) cross-links involve residues K137, K164, and K291. Residues L311–C348 form a disordered region. Composition is skewed to polar residues over residues V314–S323 and D339–C348.

Belongs to the IRF family. As to quaternary structure, interacts with CREBBP in growing cells; the interaction acetylates IRF2 and regulates IRF2-dependent H4 promoter activity.

The protein localises to the nucleus. Functionally, specifically binds to the upstream regulatory region of type I IFN and IFN-inducible MHC class I genes (the interferon consensus sequence (ICS)) and represses those genes. Also acts as an activator for several genes including H4 and IL7. Constitutively binds to the ISRE promoter to activate IL7. Involved in cell cycle regulation through binding the site II (HiNF-M) promoter region of H4 and activating transcription during cell growth. Antagonizes IRF1 transcriptional activation. In Gallus gallus (Chicken), this protein is Interferon regulatory factor 2 (IRF2).